The chain runs to 292 residues: E3 ubiquitin-protein ligase RNF144A (292 aa).

The interval 16 to 236 (PLVSCKLCLG…YDKGPCRNKL (221 aa)) is TRIAD supradomain. Residues cysteine 20, cysteine 23, cysteine 43, cysteine 46, cysteine 111, cysteine 116, cysteine 135, cysteine 138, cysteine 143, cysteine 146, histidine 151, cysteine 156, cysteine 185, and cysteine 188 each contribute to the Zn(2+) site. An RING-type 1 zinc finger spans residues 20-70 (CKLCLGEYPVEQMTTIAQCQCIFCTLCLKQYVELLIKEGLETAISCPDAAC). The IBR-type zinc-finger motif lies at 91 to 156 (QRYKKLQFER…KASWHPGQGC (66 aa)). An RING-type 2; atypical zinc finger spans residues 185-214 (CPKCKVYIERDEGCAQMMCKNCKHAFCWYC). Cysteine 198 is an active-site residue. Zn(2+) contacts are provided by cysteine 203, cysteine 206, cysteine 211, cysteine 214, histidine 226, and cysteine 232. A helical membrane pass occupies residues 250–270 (VVGIFAGFGLLLLVASPFLLL).

It belongs to the RBR family. RNF144 subfamily. Self-associates. Interacts with UBE2L3. In terms of processing, auto-ubiquitinated.

It localises to the cell membrane. Its subcellular location is the cytoplasmic vesicle membrane. It is found in the endosome membrane. The protein localises to the endoplasmic reticulum membrane. The catalysed reaction is [E2 ubiquitin-conjugating enzyme]-S-ubiquitinyl-L-cysteine + [acceptor protein]-L-lysine = [E2 ubiquitin-conjugating enzyme]-L-cysteine + [acceptor protein]-N(6)-ubiquitinyl-L-lysine.. It participates in protein modification; protein ubiquitination. E3 ubiquitin-protein ligase which accepts ubiquitin from E2 ubiquitin-conjugating enzymes UBE2L3 and UBE2L6 in the form of a thioester and then directly transfers the ubiquitin to targeted substrates. Mediates the ubiquitination and degradation of the DNA damage kinase PRKDC during DNA damage. Positively regulates DNA virus or exogenous cytosolic DNA-triggered innate immune response by mediating STING1 ubiquitination and increasing its 'Lys-6'-linked ubiquitination and translocation from the endoplasmic reticulum to the Golgi leading to downstream signaling pathways. Plays a positive role in EGF-dependent cell proliferation by prolonging EGF/EGFR signaling during EGF stimulation through EGFR ubiquitination. Increases ERK activity independently of EGFR signaling by promoting polyubiquitination and subsequent degradation of VRK3 in the cytosol. This is E3 ubiquitin-protein ligase RNF144A (RNF144A) from Homo sapiens (Human).